The chain runs to 517 residues: DNA relaxase MbeA (517 aa).

The active-site O-(5'-phospho-DNA)-tyrosine intermediate is the Tyr-19. Residues His-97, Glu-104, and Asn-106 each coordinate a divalent metal cation. 3 disordered regions span residues 281-310, 380-405, and 496-517; these read YSPV…QEGR, PSVR…VTQS, and SLER…SLGW. Residues 297 to 310 are compositionally biased toward basic and acidic residues; it reads GRGERGDDAAQEGR. Basic and acidic residues predominate over residues 496–510; the sequence is SLERERQPEIQERTL.

This sequence to E.coli MbaA and MbkA. As to quaternary structure, interacts with MbeB and MbeC to form the relaxosome. It depends on Mn(2+) as a cofactor. Co(2+) serves as cofactor. The cofactor is Ni(2+).

The enzyme catalyses ATP-independent breakage of single-stranded DNA, followed by passage and rejoining.. Its function is as follows. Relaxase involved in plasmid ColE1 conjugative mobilization and is thus essential to promote the specific transfer of the plasmid during conjugation. First catalyzes the specific cleavage of one of the DNA strands at oriT, forming a covalent 5'-phosphotyrosine intermediate. The nic site corresponds to 5'-(1469)CTGG/CTTA(1462)-3' in the cleaved strand. The cleaved strand is then transferred through the dedicated type IV secretion apparatus. MbeA remains covalently linked at the 5' end of the strand, and once in the recipient cell, it probably catalyzes the rejoining of the two ends of the strand, re-forming the circular plasmid DNA. Is functional in vitro without a requirement for the conjugative accessory proteins. The chain is DNA relaxase MbeA (mbeA) from Escherichia coli.